The primary structure comprises 546 residues: CTP synthase (546 aa).

The amidoligase domain stretch occupies residues 1–266; it reads MTTNYIFVTG…DDLVCQRFGI (266 aa). S14 contacts CTP. S14 contacts UTP. ATP contacts are provided by residues 15–20 and D72; that span reads SLGKGI. The Mg(2+) site is built by D72 and E140. Residues 147–149, 187–192, and K223 contribute to the CTP site; these read DIE and KTKPTQ. UTP contacts are provided by residues 187-192 and K223; that span reads KTKPTQ. ATP is bound at residue 239–241; sequence KDV. The Glutamine amidotransferase type-1 domain maps to 291 to 542; sequence VIGMVGKYIE…VKAAGESVRG (252 aa). Residue G352 coordinates L-glutamine. Catalysis depends on C379, which acts as the Nucleophile; for glutamine hydrolysis. L-glutamine contacts are provided by residues 380-383, E403, and R470; that span reads LGMQ. Catalysis depends on residues H515 and E517.

Belongs to the CTP synthase family. As to quaternary structure, homotetramer.

It catalyses the reaction UTP + L-glutamine + ATP + H2O = CTP + L-glutamate + ADP + phosphate + 2 H(+). It carries out the reaction L-glutamine + H2O = L-glutamate + NH4(+). The catalysed reaction is UTP + NH4(+) + ATP = CTP + ADP + phosphate + 2 H(+). Its pathway is pyrimidine metabolism; CTP biosynthesis via de novo pathway; CTP from UDP: step 2/2. With respect to regulation, allosterically activated by GTP, when glutamine is the substrate; GTP has no effect on the reaction when ammonia is the substrate. The allosteric effector GTP functions by stabilizing the protein conformation that binds the tetrahedral intermediate(s) formed during glutamine hydrolysis. Inhibited by the product CTP, via allosteric rather than competitive inhibition. In terms of biological role, catalyzes the ATP-dependent amination of UTP to CTP with either L-glutamine or ammonia as the source of nitrogen. Regulates intracellular CTP levels through interactions with the four ribonucleotide triphosphates. This Aliivibrio fischeri (strain MJ11) (Vibrio fischeri) protein is CTP synthase.